The primary structure comprises 98 residues: NADH-ubiquinone oxidoreductase chain 4L (98 aa).

The next 3 helical transmembrane spans lie at 2–22 (SPIY…TLLF), 26–46 (LMST…MVTS), and 61–81 (ITML…LVMI).

Belongs to the complex I subunit 4L family. In terms of assembly, core subunit of respiratory chain NADH dehydrogenase (Complex I) which is composed of 45 different subunits.

The protein resides in the mitochondrion inner membrane. The catalysed reaction is a ubiquinone + NADH + 5 H(+)(in) = a ubiquinol + NAD(+) + 4 H(+)(out). Its function is as follows. Core subunit of the mitochondrial membrane respiratory chain NADH dehydrogenase (Complex I) which catalyzes electron transfer from NADH through the respiratory chain, using ubiquinone as an electron acceptor. Part of the enzyme membrane arm which is embedded in the lipid bilayer and involved in proton translocation. In Nephelomys albigularis (Tomes's rice rat), this protein is NADH-ubiquinone oxidoreductase chain 4L (MT-ND4L).